The following is a 204-amino-acid chain: Intraflagellar transport protein 27 (204 aa).

Residues 23 to 30 (GEATVGKS), 75 to 79 (DTAGS), and 136 to 139 (NKTD) each bind GTP.

It belongs to the small GTPase superfamily. Rab family. Component of the IFT complex B, the core composed of IFT25, IFT27, IFT46, IFT52, IFT74, IFT81 and IFT88 as well as associated subunits IFT20, IFT57, IFT80 and IFT172. Interacts with IFT25; the interaction is direct.

It is found in the cell projection. The protein localises to the cilium. Its subcellular location is the flagellum. It localises to the cytoplasm. The protein resides in the cytoskeleton. It is found in the flagellum basal body. In terms of biological role, small GTPase-like component of the intraflagellar transport (IFT) complex B. Forms a subcomplex within the IFT complex B with IFT25. Has very low GTPase activity either because it lacks the conserved catalytic Gln in position 79 or because it requires some GTPase-activating protein (GAP) for GTP turnover. The polypeptide is Intraflagellar transport protein 27 (IFT27) (Chlamydomonas reinhardtii (Chlamydomonas smithii)).